Reading from the N-terminus, the 389-residue chain is Probable protein phosphatase 2C 12 (389 aa).

The 315-residue stretch at 42 to 356 folds into the PPM-type phosphatase domain; the sequence is VASLFSQRGK…DDCSAVCLFL (315 aa). Asp77 and Gly78 together coordinate Mn(2+). The disordered stretch occupies residues 119-145; that stretch reads AFSDDAAASSSADSSGNSSPQPSASAS. The span at 121-145 shows a compositional bias: low complexity; it reads SDDAAASSSADSSGNSSPQPSASAS. Residues Asp301 and Asp347 each coordinate Mn(2+).

This sequence belongs to the PP2C family. Requires Mg(2+) as cofactor. It depends on Mn(2+) as a cofactor.

It catalyses the reaction O-phospho-L-seryl-[protein] + H2O = L-seryl-[protein] + phosphate. The catalysed reaction is O-phospho-L-threonyl-[protein] + H2O = L-threonyl-[protein] + phosphate. The sequence is that of Probable protein phosphatase 2C 12 from Oryza sativa subsp. japonica (Rice).